Consider the following 819-residue polypeptide: Phenylalanine--tRNA ligase beta subunit (819 aa).

The tRNA-binding domain maps to 42–154 (RGGLRGLVIG…SDAPVGMPAA (113 aa)). The B5 domain occupies 412–488 (LKPHLISLSF…RIYGYNQVEL (77 aa)). Aspartate 466, aspartate 472, glutamate 475, and glutamate 476 together coordinate Mg(2+). The 94-residue stretch at 726-819 (PRFPEVKRDL…LEQKLGAQLR (94 aa)) folds into the FDX-ACB domain.

This sequence belongs to the phenylalanyl-tRNA synthetase beta subunit family. Type 1 subfamily. As to quaternary structure, tetramer of two alpha and two beta subunits. Mg(2+) is required as a cofactor.

Its subcellular location is the cytoplasm. It catalyses the reaction tRNA(Phe) + L-phenylalanine + ATP = L-phenylalanyl-tRNA(Phe) + AMP + diphosphate + H(+). The sequence is that of Phenylalanine--tRNA ligase beta subunit from Porphyromonas gingivalis (strain ATCC BAA-308 / W83).